The chain runs to 176 residues: Large ribosomal subunit protein uL6 (176 aa).

The protein belongs to the universal ribosomal protein uL6 family. As to quaternary structure, part of the 50S ribosomal subunit.

Its function is as follows. This protein binds to the 23S rRNA, and is important in its secondary structure. It is located near the subunit interface in the base of the L7/L12 stalk, and near the tRNA binding site of the peptidyltransferase center. The protein is Large ribosomal subunit protein uL6 of Lactobacillus delbrueckii subsp. bulgaricus (strain ATCC 11842 / DSM 20081 / BCRC 10696 / JCM 1002 / NBRC 13953 / NCIMB 11778 / NCTC 12712 / WDCM 00102 / Lb 14).